The chain runs to 104 residues: Large ribosomal subunit protein uL23 (104 aa).

This sequence belongs to the universal ribosomal protein uL23 family. As to quaternary structure, part of the 50S ribosomal subunit. Contacts protein L29, and trigger factor when it is bound to the ribosome.

Its function is as follows. One of the early assembly proteins it binds 23S rRNA. One of the proteins that surrounds the polypeptide exit tunnel on the outside of the ribosome. Forms the main docking site for trigger factor binding to the ribosome. The polypeptide is Large ribosomal subunit protein uL23 (Nostoc punctiforme (strain ATCC 29133 / PCC 73102)).